Consider the following 402-residue polypeptide: Zinc finger protein 322 (402 aa).

A C2H2-type 1; atypical zinc finger spans residues 43–65 (YQCLECKQNFCENLALIMCERTH). 8 consecutive C2H2-type zinc fingers follow at residues 71–93 (YKCD…QRIH), 99–121 (YKCS…QRTH), 127–149 (YTCD…QRSH), 155–177 (YLCS…RRTH), 183–205 (FKCL…QRTH), 211–233 (YKCN…KRVH), 239–261 (YKCG…QRVH), and 267–289 (YKCL…QATH). The C2H2-type 10; degenerate zinc-finger motif lies at 293–315 (FKCLEYEKSFNCSSDLIVHQRIH). The segment at 351–373 (YKYTVCDKSFHQSSALLQHQTVH) adopts a C2H2-type 11; degenerate zinc-finger fold. A Phosphoserine modification is found at serine 391.

This sequence belongs to the krueppel C2H2-type zinc-finger protein family. In terms of assembly, interacts with POU5F1. Ubiquitous. Highly expressed in heart and skeletal muscle.

The protein localises to the cytoplasm. It is found in the nucleus. In terms of biological role, transcriptional activator. Important for maintenance of pluripotency in embryonic stem cells. Binds directly to the POU5F1 distal enhancer and the NANOG proximal promoter, and enhances expression of both genes. Can also bind to numerous other gene promoters and regulates expression of many other pluripotency factors, either directly or indirectly. Promotes inhibition of MAPK signaling during embryonic stem cell differentiation. The chain is Zinc finger protein 322 (ZNF322) from Homo sapiens (Human).